Reading from the N-terminus, the 580-residue chain is External alternative NAD(P)H-ubiquinone oxidoreductase B3, mitochondrial (580 aa).

Residues 1–38 (MRPFAYFERLSQAFHDYPSLSKILVVSTISGGGLIVYS) constitute a mitochondrion transit peptide. 57–87 (KVVLLGTGWAGASFLKTLNNSSYEVQVISPR) provides a ligand contact to FAD. 221–257 (LHFVVVGGGPTGVEFASELHDFVNEDLVKLYPKAKNL) serves as a coordination point for NAD(+). Residues 377-412 (KVMEDIAAIFKKADKENSGTLTMKEFHEVMSDICDR) enclose the EF-hand domain. Ca(2+) is bound by residues D390, S394, T396, and E401. The Microbody targeting signal signature appears at 571–580 (FIFGRDSSRI).

The protein belongs to the NADH dehydrogenase family. Requires FAD as cofactor. Expressed at low levels in seedlings, roots, stems, buds and flowers and, to a lower extent, in leaves and cotyledons.

Its subcellular location is the mitochondrion inner membrane. The protein resides in the peroxisome. It carries out the reaction a quinone + NADH + H(+) = a quinol + NAD(+). The enzyme catalyses a ubiquinone + NADH + H(+) = a ubiquinol + NAD(+). Functionally, alternative NADH-ubiquinone oxidoreductase which catalyzes the oxidation of mitochondrial NADH does not translocate protons across the inner mitochondrial membrane. The protein is External alternative NAD(P)H-ubiquinone oxidoreductase B3, mitochondrial (NDB3) of Arabidopsis thaliana (Mouse-ear cress).